Here is a 423-residue protein sequence, read N- to C-terminus: MLDTLLINIGQLLTMDQEDGLLRREAMNTLPVIENGAVGIENGVITFVGTAEEAKGLQAKEVIDCGGKMVSPGLVDPHTHLVFGGSRENEIALKLQGVPYLEILEQGGGILSTVNATKQSSKEELVQKAKFHLDRMLSFGVTTVEAKSGYGLDDETEWKQLEATAQLQKEHPIDLVSTFLGAHAVPKEYKGRSKEFLQWMLDLLPEMKEKQLAEFVDIFCETGVFSVEESKEFLLKAKELGFDVKIHADEIDPLGGAEAAAEIGAASADHLVGASDKGIEMLANSNTVATLLPGTTFYLNKESFARGRKMIDEGVAVALATDFNPGSCPTENIQLIMSIAMLKLKMTPEEVWNAVTVNSSYAINRGDVAGKIRVGRKADLVLWDAYNYAYVPYHYGVSHVNTVWKNGNIAYTRGEQSWSTATI.

2 residues coordinate Fe(3+): H78 and H80. H78 and H80 together coordinate Zn(2+). 3 residues coordinate 4-imidazolone-5-propanoate: R87, Y150, and H183. Y150 lines the N-formimidoyl-L-glutamate pocket. H247 contributes to the Fe(3+) binding site. Zn(2+) is bound at residue H247. Position 250 (E250) interacts with 4-imidazolone-5-propanoate. Fe(3+) is bound at residue D322. D322 is a binding site for Zn(2+). N-formimidoyl-L-glutamate-binding residues include N324 and G326. S327 contributes to the 4-imidazolone-5-propanoate binding site.

Belongs to the metallo-dependent hydrolases superfamily. HutI family. It depends on Zn(2+) as a cofactor. Fe(3+) is required as a cofactor.

The protein resides in the cytoplasm. The enzyme catalyses 4-imidazolone-5-propanoate + H2O = N-formimidoyl-L-glutamate. It functions in the pathway amino-acid degradation; L-histidine degradation into L-glutamate; N-formimidoyl-L-glutamate from L-histidine: step 3/3. In terms of biological role, catalyzes the hydrolytic cleavage of the carbon-nitrogen bond in imidazolone-5-propanoate to yield N-formimidoyl-L-glutamate. It is the third step in the universal histidine degradation pathway. The sequence is that of Imidazolonepropionase from Bacillus cereus (strain ATCC 10987 / NRS 248).